A 458-amino-acid polypeptide reads, in one-letter code: tRNA modification GTPase MnmE (458 aa).

(6S)-5-formyl-5,6,7,8-tetrahydrofolate-binding residues include R26, E88, and R127. The region spanning 224–378 (GLSTAIIGRP…IEERINDIFF (155 aa)) is the TrmE-type G domain. N234 is a binding site for K(+). Residues 234-239 (NVGKSS), 253-259 (TDIEGTT), and 278-281 (DTAG) each bind GTP. Residue S238 coordinates Mg(2+). Positions 253, 255, and 258 each coordinate K(+). T259 contributes to the Mg(2+) binding site. K458 contacts (6S)-5-formyl-5,6,7,8-tetrahydrofolate.

It belongs to the TRAFAC class TrmE-Era-EngA-EngB-Septin-like GTPase superfamily. TrmE GTPase family. Homodimer. Heterotetramer of two MnmE and two MnmG subunits. Requires K(+) as cofactor.

The protein localises to the cytoplasm. Exhibits a very high intrinsic GTPase hydrolysis rate. Involved in the addition of a carboxymethylaminomethyl (cmnm) group at the wobble position (U34) of certain tRNAs, forming tRNA-cmnm(5)s(2)U34. The protein is tRNA modification GTPase MnmE of Streptococcus agalactiae serotype III (strain NEM316).